The sequence spans 412 residues: Lysosomal phospholipase A and acyltransferase (412 aa).

A signal peptide spans 1–33; the sequence is MGLHLRPYRVGLLPDGLLFLLLLLMLLADPALP. Asp46 contacts substrate. Residues Cys65 and Cys89 are joined by a disulfide bond. Asn99 carries N-linked (GlcNAc...) asparagine glycosylation. Ser198 acts as the Acyl-ester intermediate in catalysis. Ser198 contributes to the Zn(2+) binding site. Residue Met199 participates in substrate binding. Asn273 and Asn289 each carry an N-linked (GlcNAc...) asparagine glycan. Zn(2+) is bound by residues Asp340 and Cys355. Catalysis depends on charge relay system residues Asp360 and His392. Zn(2+) is bound at residue His392. An N-linked (GlcNAc...) asparagine glycan is attached at Asn398.

This sequence belongs to the AB hydrolase superfamily. Lipase family. Post-translationally, N-glycosylated. N-glycosylation is important for maturation of the enzyme and normal subcellular location. Detected in blood plasma (at protein level). Ubiquitous. Highly expressed in heart, placenta, skeletal muscle, kidney and pancreas. Detected at lower levels in spleen, thymus, prostate, testis, ovary, small intestine, colon and peripheral blood leukocytes.

The protein localises to the lysosome. It localises to the secreted. The protein resides in the membrane. The enzyme catalyses a 1,2-diacyl-sn-glycero-3-phosphocholine + H2O = a 2-acyl-sn-glycero-3-phosphocholine + a fatty acid + H(+). The catalysed reaction is 1-hexadecanoyl-2-(9Z-octadecenoyl)-sn-glycero-3-phosphocholine + H2O = 2-(9Z-octadecenoyl)-sn-glycero-3-phosphocholine + hexadecanoate + H(+). It catalyses the reaction 1-hexadecanoyl-2-glutaroyl-sn-glycero-3-phosphocholine + H2O = 2-glutaroyl-sn-glycero-3-phosphocholine + hexadecanoate + H(+). It carries out the reaction 1-hexadecanoyl-2-nonadioyl-sn-glycero-3-phosphocholine + H2O = 2-nonadioyl-sn-glycero-3-phosphocholine + hexadecanoate + H(+). The enzyme catalyses 1-hexadecanoyl-2-(5-oxopentanoyl)-sn-glycero-3-phosphocholine + H2O = 2-(5-oxopentanoyl)-sn-glycero-3-phosphocholine + hexadecanoate + H(+). The catalysed reaction is 1-hexadecanoyl-2-(9-oxononanoyl)-sn-glycero-3-phosphocholine + H2O = 2-(9-oxononanoyl)-sn-glycero-3-phosphocholine + hexadecanoate + H(+). It catalyses the reaction 1,2-dihexadecanoyl-sn-glycero-3-phosphocholine + H2O = 2-hexadecanoyl-sn-glycero-3-phosphocholine + hexadecanoate + H(+). It carries out the reaction a 1,2-diacyl-sn-glycero-3-phosphocholine + H2O = a 1-acyl-sn-glycero-3-phosphocholine + a fatty acid + H(+). The enzyme catalyses 1,2-di-(9Z-octadecenoyl)-sn-glycero-3-phosphocholine + H2O = 1-(9Z-octadecenoyl)-sn-glycero-3-phosphocholine + (9Z)-octadecenoate + H(+). The catalysed reaction is 1-hexadecanoyl-2-(9Z-octadecenoyl)-sn-glycero-3-phosphocholine + H2O = 1-hexadecanoyl-sn-glycero-3-phosphocholine + (9Z)-octadecenoate + H(+). It catalyses the reaction 1,2-dihexadecanoyl-sn-glycero-3-phosphocholine + H2O = 1-hexadecanoyl-sn-glycero-3-phosphocholine + hexadecanoate + H(+). It carries out the reaction a 1-acyl-sn-glycero-3-phosphocholine + H2O = sn-glycerol 3-phosphocholine + a fatty acid + H(+). The enzyme catalyses 1-hexadecanoyl-sn-glycero-3-phosphocholine + H2O = sn-glycerol 3-phosphocholine + hexadecanoate + H(+). The catalysed reaction is N-(acetyl)-sphing-4-enine + a 1,2-diacyl-sn-glycero-3-phosphoethanolamine = 1-O-acyl-N-(acetyl)-sphing-4-enine + a 2-acyl-sn-glycero-3-phosphoethanolamine. It catalyses the reaction 1-hexadecanoyl-2-(9Z-octadecenoyl)-sn-glycero-3-phosphoethanolamine + N-(acetyl)-sphing-4-enine = 2-(9Z-octadecenoyl)-sn-glycero-3-phosphoethanolamine + 1-hexadecanoyl-N-(acetyl)-sphing-4-enine. It carries out the reaction 1-hexadecanoyl-2-(9Z,12Z-octadecadienoyl)-sn-glycero-3-phosphoethanolamine + N-(acetyl)-sphing-4-enine = 2-(9Z,12Z)-octadecadienoyl-sn-glycero-3-phosphoethanolamine + 1-hexadecanoyl-N-(acetyl)-sphing-4-enine. The enzyme catalyses 1-hexadecanoyl-2-(5Z,8Z,11Z,14Z-eicosatetraenoyl)-sn-glycero-3-phosphoethanolamine + N-(acetyl)-sphing-4-enine = 2-(5Z,8Z,11Z,14Z)-eicosatetraenoyl-sn-glycero-3-phosphoethanolamine + 1-hexadecanoyl-N-(acetyl)-sphing-4-enine. The catalysed reaction is N-(acetyl)-sphing-4-enine + a 1,2-diacyl-sn-glycero-3-phosphoethanolamine = 1-O-acyl-N-(acetyl)-sphing-4-enine + a 1-acyl-sn-glycero-3-phosphoethanolamine. It catalyses the reaction 1-hexadecanoyl-2-(9Z-octadecenoyl)-sn-glycero-3-phosphoethanolamine + N-(acetyl)-sphing-4-enine = 1-(9Z-octadecenoyl)-N-(acetyl)-sphing-4-enine + 1-hexadecanoyl-sn-glycero-3-phosphoethanolamine. It carries out the reaction 1-hexadecanoyl-2-(9Z,12Z-octadecadienoyl)-sn-glycero-3-phosphoethanolamine + N-(acetyl)-sphing-4-enine = 1-(9Z,12Z-octadecadienoyl)-N-acetylsphing-4-enine + 1-hexadecanoyl-sn-glycero-3-phosphoethanolamine. The enzyme catalyses 1-hexadecanoyl-2-(5Z,8Z,11Z,14Z-eicosatetraenoyl)-sn-glycero-3-phosphoethanolamine + N-(acetyl)-sphing-4-enine = 1-(5Z,8Z,11Z,14Z)-eicosatetraenoyl-N-(acetyl)-sphing-4-enine + 1-hexadecanoyl-sn-glycero-3-phosphoethanolamine. The catalysed reaction is N-(acetyl)-sphing-4-enine + a 1,2-diacyl-sn-glycero-3-phosphocholine = 1-O-acyl-N-(acetyl)-sphing-4-enine + a 1-acyl-sn-glycero-3-phosphocholine. It catalyses the reaction 1-hexadecanoyl-2-(9Z-octadecenoyl)-sn-glycero-3-phosphocholine + N-(acetyl)-sphing-4-enine = 1-(9Z-octadecenoyl)-N-(acetyl)-sphing-4-enine + 1-hexadecanoyl-sn-glycero-3-phosphocholine. It carries out the reaction 1-hexadecanoyl-2-(9Z,12Z-octadecadienoyl)-sn-glycero-3-phosphocholine + N-(acetyl)-sphing-4-enine = 1-(9Z,12Z-octadecadienoyl)-N-acetylsphing-4-enine + 1-hexadecanoyl-sn-glycero-3-phosphocholine. The enzyme catalyses 1-hexadecanoyl-2-(5Z,8Z,11Z,14Z-eicosatetraenoyl)-sn-glycero-3-phosphocholine + N-(acetyl)-sphing-4-enine = 1-(5Z,8Z,11Z,14Z)-eicosatetraenoyl-N-(acetyl)-sphing-4-enine + 1-hexadecanoyl-sn-glycero-3-phosphocholine. The catalysed reaction is 1-hexadecanoyl-2-(4Z,7Z,10Z,13Z,16Z,19Z-docosahexaenoyl)-sn-glycero-3-phosphocholine + N-(acetyl)-sphing-4-enine = 1-(4Z,7Z,10Z,13Z,16Z,19Z-docosahexaenoyl)-N-(acetyl)-sphing-4-enine + 1-hexadecanoyl-sn-glycero-3-phosphocholine. It catalyses the reaction 1-octadecanoyl-2-(9Z-octadecenoyl)-sn-glycero-3-phosphocholine + N-(acetyl)-sphing-4-enine = 1-(9Z-octadecenoyl)-N-(acetyl)-sphing-4-enine + 1-octadecanoyl-sn-glycero-3-phosphocholine. It carries out the reaction 1-octadecanoyl-2-(9Z,12Z)-octadecadienoyl-sn-glycero-3-phosphocholine + N-(acetyl)-sphing-4-enine = 1-(9Z,12Z-octadecadienoyl)-N-acetylsphing-4-enine + 1-octadecanoyl-sn-glycero-3-phosphocholine. The enzyme catalyses 1-octadecanoyl-2-(5Z,8Z,11Z,14Z-eicosatetraenoyl)-sn-glycero-3-phosphocholine + N-(acetyl)-sphing-4-enine = 1-(5Z,8Z,11Z,14Z)-eicosatetraenoyl-N-(acetyl)-sphing-4-enine + 1-octadecanoyl-sn-glycero-3-phosphocholine. The catalysed reaction is 1-(9Z-octadecenoyl)-2-hexadecanoyl-sn-glycero-3-phosphocholine + N-(acetyl)-sphing-4-enine = 1-hexadecanoyl-N-(acetyl)-sphing-4-enine + 1-(9Z-octadecenoyl)-sn-glycero-3-phosphocholine. It catalyses the reaction 1-(9Z)-octadecenoyl-2-octadecanoyl-sn-glycero-3-phosphocholine + N-(acetyl)-sphing-4-enine = 1-octadecanoyl-N-(acetyl)-sphing-4-enine + 1-(9Z-octadecenoyl)-sn-glycero-3-phosphocholine. It carries out the reaction 1,2-di-(9Z-octadecenoyl)-sn-glycero-3-phosphocholine + N-(acetyl)-sphing-4-enine = 1-(9Z-octadecenoyl)-N-(acetyl)-sphing-4-enine + 1-(9Z-octadecenoyl)-sn-glycero-3-phosphocholine. The enzyme catalyses N-(acetyl)-sphing-4-enine + a 1,2-diacyl-sn-glycero-3-phosphocholine = 1-O-acyl-N-(acetyl)-sphing-4-enine + a 2-acyl-sn-glycero-3-phosphocholine. The catalysed reaction is 1-hexadecanoyl-2-(9Z-octadecenoyl)-sn-glycero-3-phosphocholine + N-(acetyl)-sphing-4-enine = 1-hexadecanoyl-N-(acetyl)-sphing-4-enine + 2-(9Z-octadecenoyl)-sn-glycero-3-phosphocholine. It catalyses the reaction 1-hexadecanoyl-2-(9Z,12Z-octadecadienoyl)-sn-glycero-3-phosphocholine + N-(acetyl)-sphing-4-enine = 2-(9Z,12Z-octadecadienoyl)-sn-glycero-3-phosphocholine + 1-hexadecanoyl-N-(acetyl)-sphing-4-enine. It carries out the reaction 1-hexadecanoyl-2-(5Z,8Z,11Z,14Z-eicosatetraenoyl)-sn-glycero-3-phosphocholine + N-(acetyl)-sphing-4-enine = 1-hexadecanoyl-N-(acetyl)-sphing-4-enine + 2-(5Z,8Z,11Z,14Z)-eicosatetraenoyl-sn-glycero-3-phosphocholine. The enzyme catalyses 1-hexadecanoyl-2-(4Z,7Z,10Z,13Z,16Z,19Z-docosahexaenoyl)-sn-glycero-3-phosphocholine + N-(acetyl)-sphing-4-enine = 2-(4Z,7Z,10Z,13Z,16Z,19Z-docosahexaenoyl)-sn-glycero-3-phosphocholine + 1-hexadecanoyl-N-(acetyl)-sphing-4-enine. The catalysed reaction is 1-hexadecanoyl-2-nonadioyl-sn-glycero-3-phosphocholine + N-(acetyl)-sphing-4-enine = 2-nonadioyl-sn-glycero-3-phosphocholine + 1-hexadecanoyl-N-(acetyl)-sphing-4-enine. It catalyses the reaction 1-octadecanoyl-2-(9Z-octadecenoyl)-sn-glycero-3-phosphocholine + N-(acetyl)-sphing-4-enine = 1-octadecanoyl-N-(acetyl)-sphing-4-enine + 2-(9Z-octadecenoyl)-sn-glycero-3-phosphocholine. It carries out the reaction 1-octadecanoyl-2-(5Z,8Z,11Z,14Z-eicosatetraenoyl)-sn-glycero-3-phosphocholine + N-(acetyl)-sphing-4-enine = 1-octadecanoyl-N-(acetyl)-sphing-4-enine + 2-(5Z,8Z,11Z,14Z)-eicosatetraenoyl-sn-glycero-3-phosphocholine. The enzyme catalyses 1-(9Z-octadecenoyl)-2-hexadecanoyl-sn-glycero-3-phosphocholine + N-(acetyl)-sphing-4-enine = 1-(9Z-octadecenoyl)-N-(acetyl)-sphing-4-enine + 2-hexadecanoyl-sn-glycero-3-phosphocholine. The catalysed reaction is 1-(9Z)-octadecenoyl-2-octadecanoyl-sn-glycero-3-phosphocholine + N-(acetyl)-sphing-4-enine = 2-octadecanoyl-sn-glycero-3-phosphocholine + 1-(9Z-octadecenoyl)-N-(acetyl)-sphing-4-enine. It catalyses the reaction a 1,2-diacyl-sn-glycero-3-phospho-L-serine + N-(acetyl)-sphing-4-enine = a 2-acyl-sn-glycero-3-phospho-L-serine + 1-O-acyl-N-(acetyl)-sphing-4-enine. It carries out the reaction 1-octadecanoyl-2-(9Z-octadecenoyl)-sn-glycero-3-phospho-L-serine + N-(acetyl)-sphing-4-enine = 2-(9Z-octadecenoyl)-sn-glycero-3-phospho-L-serine + 1-octadecanoyl-N-(acetyl)-sphing-4-enine. The enzyme catalyses a 1,2-diacyl-sn-glycero-3-phospho-L-serine + N-(acetyl)-sphing-4-enine = 1-O-acyl-N-(acetyl)-sphing-4-enine + a 1-acyl-sn-glycero-3-phospho-L-serine. The catalysed reaction is 1-octadecanoyl-2-(9Z-octadecenoyl)-sn-glycero-3-phospho-L-serine + N-(acetyl)-sphing-4-enine = 1-octadecanoyl-sn-glycero-3-phosphoserine + 1-(9Z-octadecenoyl)-N-(acetyl)-sphing-4-enine. It catalyses the reaction a 1,2-diacyl-sn-glycero-3-phospho-(1'-sn-glycerol) + N-(acetyl)-sphing-4-enine = 2-acyl-sn-glycero-3-phospho-(1'-sn-glycerol) + 1-O-acyl-N-(acetyl)-sphing-4-enine. It carries out the reaction 1-octadecanoyl-2-(9Z-octadecenoyl)-sn-glycero-3-phospho-(1'-sn-glycerol) + N-(acetyl)-sphing-4-enine = 2-(9Z-octadecenoyl)-sn-glycero-3-phospho-(1'-sn-glycerol) + 1-octadecanoyl-N-(acetyl)-sphing-4-enine. The enzyme catalyses a 1,2-diacyl-sn-glycero-3-phospho-(1'-sn-glycerol) + N-(acetyl)-sphing-4-enine = 1-O-acyl-N-(acetyl)-sphing-4-enine + 1-acyl-sn-glycero-3-phospho-(1'-sn-glycerol). The catalysed reaction is 1-octadecanoyl-2-(9Z-octadecenoyl)-sn-glycero-3-phospho-(1'-sn-glycerol) + N-(acetyl)-sphing-4-enine = 1-octadecanoyl-sn-glycero-3-phospho-(1'-sn-glycerol) + 1-(9Z-octadecenoyl)-N-(acetyl)-sphing-4-enine. It catalyses the reaction an N-acylethanolamine + a 1,2-diacyl-sn-glycero-3-phosphocholine = 2-(acylamino)ethyl fatty acid + a 2-acyl-sn-glycero-3-phosphocholine. It carries out the reaction an N-acylethanolamine + a 1,2-diacyl-sn-glycero-3-phosphocholine = 2-(acylamino)ethyl fatty acid + a 1-acyl-sn-glycero-3-phosphocholine. The enzyme catalyses N-(5Z,8Z,11Z,14Z-eicosatetraenoyl)-ethanolamine + 1,2-di-(9Z-octadecenoyl)-sn-glycero-3-phosphocholine = 2-[(5Z,8Z,11Z,14Z)-eicosatetraenoylamino]ethyl (9Z)-octadecenoate + (9Z-octadecenoyl)-sn-glycero-3-phosphocholine. The catalysed reaction is N-(9Z-octadecenoyl) ethanolamine + 1,2-di-(9Z-octadecenoyl)-sn-glycero-3-phosphocholine = 2-[(9Z)-octadecenoylamino]ethyl (9Z)-octadecenoate + (9Z-octadecenoyl)-sn-glycero-3-phosphocholine. It catalyses the reaction a 3-acyl-sn-glycerol + a 1,2-diacyl-sn-glycero-3-phosphocholine = a 1,3-diacylglycerol + a 1-acyl-sn-glycero-3-phosphocholine. It carries out the reaction a 3-acyl-sn-glycerol + a 1,2-diacyl-sn-glycero-3-phosphocholine = a 1,3-diacylglycerol + a 2-acyl-sn-glycero-3-phosphocholine. The enzyme catalyses 3-(9Z-octadecenoyl)-sn-glycerol + 1,2-di-(9Z-octadecenoyl)-sn-glycero-3-phosphocholine = 1,3-di-(9Z-octadecenoyl)-glycerol + (9Z-octadecenoyl)-sn-glycero-3-phosphocholine. The catalysed reaction is 3-hexadecanoyl-sn-glycerol + 1,2-di-(9Z-octadecenoyl)-sn-glycero-3-phosphocholine = 1-(9Z)-octadecenoyl-3-hexadecanoyl-sn-glycerol + (9Z-octadecenoyl)-sn-glycero-3-phosphocholine. It catalyses the reaction a 1-acyl-sn-glycerol + a 1,2-diacyl-sn-glycero-3-phosphocholine = a 1,3-diacylglycerol + a 2-acyl-sn-glycero-3-phosphocholine. It carries out the reaction a 1-acyl-sn-glycerol + a 1,2-diacyl-sn-glycero-3-phosphocholine = a 1,3-diacylglycerol + a 1-acyl-sn-glycero-3-phosphocholine. The enzyme catalyses 1-(9Z-octadecenoyl)-sn-glycerol + 1,2-di-(9Z-octadecenoyl)-sn-glycero-3-phosphocholine = 1,3-di-(9Z-octadecenoyl)-glycerol + (9Z-octadecenoyl)-sn-glycero-3-phosphocholine. The catalysed reaction is 1-hexadecanoyl-sn-glycerol + 1,2-di-(9Z-octadecenoyl)-sn-glycero-3-phosphocholine = 1-hexadecanoyl-3-(9Z)-octadecenoyl-sn-glycerol + (9Z-octadecenoyl)-sn-glycero-3-phosphocholine. It catalyses the reaction a 2-acylglycerol + a 1,2-diacyl-sn-glycero-3-phosphocholine = a 1,2-diacylglycerol + a 2-acyl-sn-glycero-3-phosphocholine. It carries out the reaction a 2-acylglycerol + a 1,2-diacyl-sn-glycero-3-phosphocholine = a 1,2-diacylglycerol + a 1-acyl-sn-glycero-3-phosphocholine. The enzyme catalyses 2-hexadecanoylglycerol + 1,2-di-(9Z-octadecenoyl)-sn-glycero-3-phosphocholine = 1-(9Z)-octadecenoyl-2-hexadecanoylglycerol + (9Z-octadecenoyl)-sn-glycero-3-phosphocholine. The catalysed reaction is 1-O-alkylglycerol + a 1,2-diacyl-sn-glycero-3-phosphocholine = 1-O-alkyl-3-acylglycerol + a 1-acyl-sn-glycero-3-phosphocholine. It catalyses the reaction 1-O-alkylglycerol + a 1,2-diacyl-sn-glycero-3-phosphocholine = 1-O-alkyl-3-acylglycerol + a 2-acyl-sn-glycero-3-phosphocholine. It carries out the reaction 1-O-hexadecylglycerol + 1,2-di-(9Z-octadecenoyl)-sn-glycero-3-phosphocholine = 1-O-hexadecyl-3-(9Z)-octadecenoylglycerol + (9Z-octadecenoyl)-sn-glycero-3-phosphocholine. The enzyme catalyses 1-O-alkyl-2-acyl-sn-glycerol + a 1,2-diacyl-sn-glycero-3-phosphocholine = 1-O-alkyl-2,3-diacyl-sn-glycerol + a 2-acyl-sn-glycero-3-phosphocholine. The catalysed reaction is 1-O-alkyl-2-acyl-sn-glycerol + a 1,2-diacyl-sn-glycero-3-phosphocholine = 1-O-alkyl-2,3-diacyl-sn-glycerol + a 1-acyl-sn-glycero-3-phosphocholine. It catalyses the reaction 1-O-hexadecyl-2-acetyl-sn-glycerol + 1,2-di-(9Z-octadecenoyl)-sn-glycero-3-phosphocholine = 1-O-hexadecyl-2-acetyl-3-(9Z)-octadecenoyl-sn-glycerol + (9Z-octadecenoyl)-sn-glycero-3-phosphocholine. It carries out the reaction 1-O-hexadecyl-2-O-methyl-sn-glycerol + 1,2-di-(9Z-octadecenoyl)-sn-glycero-3-phosphocholine = 1-O-hexadecyl-2-O-methyl-3-(9Z)-octadecenoyl-sn-glycerol + (9Z-octadecenoyl)-sn-glycero-3-phosphocholine. The enzyme catalyses a 1,2-diacyl-sn-glycero-3-phosphoethanolamine + H2O = a 1-acyl-sn-glycero-3-phosphoethanolamine + a fatty acid + H(+). The catalysed reaction is 1-acyl-2-(5Z,8Z,11Z,14Z)-eicosatetraenoyl-sn-glycero-3-phosphoethanolamine + H2O = a 1-acyl-sn-glycero-3-phosphoethanolamine + (5Z,8Z,11Z,14Z)-eicosatetraenoate + H(+). It catalyses the reaction a 1,2-diacyl-sn-glycero-3-phospho-(1'-sn-glycerol) + H2O = 1-acyl-sn-glycero-3-phospho-(1'-sn-glycerol) + a fatty acid + H(+). It carries out the reaction 1-hexadecanoyl-2-(9Z-octadecenoyl)-sn-glycero-3-phospho-(1'-sn-glycerol) + H2O = 1-hexadecanoyl-sn-glycero-3-phospho-(1'-sn-glycerol) + (9Z)-octadecenoate + H(+). The enzyme catalyses a 1,2-diacyl-sn-glycero-3-phospho-(1'-sn-glycerol) + H2O = 2-acyl-sn-glycero-3-phospho-(1'-sn-glycerol) + a fatty acid + H(+). The catalysed reaction is 1-hexadecanoyl-2-(9Z-octadecenoyl)-sn-glycero-3-phospho-(1'-sn-glycerol) + H2O = 2-(9Z-octadecenoyl)-sn-glycero-3-phospho-(1'-sn-glycerol) + hexadecanoate + H(+). Inhibited by zinc ions at neutral pH. Zinc ions in plasma may keep the enzyme from hydrolyzing inappropriate substrates. In terms of biological role, has dual calcium-independent phospholipase and O-acyltransferase activities with a potential role in glycerophospholipid homeostasis and remodeling of acyl groups of lipophilic alcohols present in acidic cellular compartments. Catalyzes hydrolysis of the ester bond of the fatty acyl group attached at sn-1 or sn-2 position of phospholipids (phospholipase A1 or A2 activity) and transfer it to the hydroxyl group at the first carbon of lipophilic alcohols (O-acyltransferase activity). Among preferred fatty acyl donors are phosphatidylcholines, phosphatidylethanolamines, phosphatidylglycerols and phosphatidylserines. Favors sn-2 over sn-1 deacylation of unsaturated fatty acyl groups of phosphatidylcholines, phosphatidylethanolamines, and phosphatidylglycerols. Among preferred fatty acyl acceptors are natural lipophilic alcohols including short-chain ceramide N-acetyl-sphingosine (C2 ceramide), alkylacylglycerols, monoacylglycerols, and acylethanolamides such as anandamide and oleoylethanolamide. Selectively hydrolyzes the sn-1 fatty acyl group of truncated oxidized phospholipids and may play a role in detoxification of reactive oxidized phospholipids during oxidative stress. Required for normal phospholipid degradation in alveolar macrophages with potential implications in the clearance of pulmonary surfactant, which is mainly composed of dipalmitoylphosphatidylcholine (1,2-dihexadecanoyl-sn-glycero-3-phosphocholine). Involved in the first step of bis(monoacylglycero)phosphate (BMP) de novo synthesis from phosphatidylglycerol (1,2-diacyl-sn-glycero-3-phospho-(1'-sn-glycerol), PG). BMP is an important player in cargo sorting and degradation, regulation of cellular cholesterol levels and intercellular communication. At neutral pH, hydrolyzes the sn-1 fatty acyl group of the lysophosphatidylcholines. The polypeptide is Lysosomal phospholipase A and acyltransferase (Homo sapiens (Human)).